We begin with the raw amino-acid sequence, 88 residues long: Putative sulfur carrier protein AF_0554 (88 aa).

The Cysteine persulfide intermediate role is filled by cysteine 26.

This sequence belongs to the sulfur carrier protein TusA family.

This is Putative sulfur carrier protein AF_0554 from Archaeoglobus fulgidus (strain ATCC 49558 / DSM 4304 / JCM 9628 / NBRC 100126 / VC-16).